The following is a 343-amino-acid chain: Peroxisome assembly protein 12 (343 aa).

Residues 1–5 (MDSPS) are Peroxisomal matrix-facing. Residues 6-33 (LLEVLQVQQVEKLISPSLRFILAYFTHR) traverse the membrane as a helical segment. The Cytoplasmic segment spans residues 34-37 (YPRF). A helical membrane pass occupies residues 38 to 62 (LLRAYNSFDGIYLLVKLLLEKSQLK). The Peroxisomal matrix portion of the chain corresponds to 63–102 (KWNATSVERRFQLKRVIAVRDSSIIAEEFPQESESATSLN). Residues 103–140 (GIDVLKKLFLTYCIPYLLEKCESLTTVKENHTAVSILS) traverse the membrane as a helical segment. Residues 141-146 (LQARDK) are Cytoplasmic-facing. Residues 147–193 (QKGALSVFYSKIKILLVRLKKILHFVFRLIRKSNTYLQWLYYLLYAL) traverse the membrane as a helical segment. Topologically, residues 194–238 (GKTPYTNLADHILRQRVIYNVENIHSRKLISTREKSSLLTSIADH) are peroxisomal matrix. Residues 239 to 266 (SMEGFLIIIQLIDWWQSNNYESHLKKGE) form a helical membrane-spanning segment. At 267–343 (VAFTELAPPK…KGESFWRLMI (77 aa)) the chain is on the cytoplasmic side. 4 residues coordinate Zn(2+): Cys-289, Cys-292, Cys-309, and Cys-312. The RING-type; degenerate zinc finger occupies 289–328 (CKICGEKIKNPAVLSTGFVFCYPCIQVWLQRHPFKCPVTN).

The protein belongs to the pex2/pex10/pex12 family. In terms of assembly, component of the PEX2-PEX10-PEX12 retrotranslocation channel, composed of PEX2, PEX10 and PEX12.

Its subcellular location is the peroxisome membrane. It functions in the pathway protein modification; protein ubiquitination. Functionally, component of a retrotranslocation channel required for peroxisome organization by mediating export of the PEX5 receptor from peroxisomes to the cytosol, thereby promoting PEX5 recycling. The retrotranslocation channel is composed of PEX2, PEX10 and PEX12; each subunit contributing transmembrane segments that coassemble into an open channel that specifically allows the passage of PEX5 through the peroxisomal membrane. PEX12 also regulates PEX5 recycling by activating the E3 ubiquitin-protein ligase activity of PEX10. When PEX5 recycling is compromised, PEX12 stimulates PEX10-mediated polyubiquitination of PEX5, leading to its subsequent degradation. This chain is Peroxisome assembly protein 12 (pex12), found in Schizosaccharomyces pombe (strain 972 / ATCC 24843) (Fission yeast).